Reading from the N-terminus, the 784-residue chain is Kinesin-like protein Klp68D (784 aa).

Residues 19 to 344 enclose the Kinesin motor domain; the sequence is CVQVVVRCRP…LRYASRAKSI (326 aa). An ATP-binding site is contributed by 106-113; that stretch reads GQTGTGKT. Positions 351–385 form a coiled coil; sequence NEDPQDAKLKEYQEEIERLKRLIGPQQQQRSEKQV. 3 disordered regions span residues 371-449, 605-652, and 742-784; these read RLIG…ERER, KFSS…PSSL, and IKSS…LVNK. The span at 386–396 shows a compositional bias: basic residues; that stretch reads TAKKQRVKKPK. The span at 416-428 shows a compositional bias: acidic residues; sequence PVEDDSDPEGAES. A coiled-coil region spans residues 426–582; the sequence is AESESDKENE…KRQLLIIDNF (157 aa). Positions 429–449 are enriched in basic and acidic residues; it reads ESDKENEAEVAKSNEELERER. The segment covering 622 to 634 has biased composition (basic residues); that stretch reads SSKRPVSHPQRRR. Low complexity predominate over residues 769-778; that stretch reads KKPASAYPKA.

This sequence belongs to the TRAFAC class myosin-kinesin ATPase superfamily. Kinesin family. Kinesin II subfamily. Expressed primarily in the central nervous system and in a subset of the peripheral nervous system during embryogenesis.

It localises to the cytoplasm. Its subcellular location is the cytoskeleton. In terms of biological role, plus-end directed microtubule motor that may be used for anterograde axonal transport and could conceivably move cargos in fly neurons different than those moved by kinesin heavy chain or other plus-end directed motors. This chain is Kinesin-like protein Klp68D (Klp68D), found in Drosophila melanogaster (Fruit fly).